The following is a 940-amino-acid chain: Testis-expressed protein 11 (940 aa).

Belongs to the SPO22 family. In terms of assembly, interacts with SYCP2. Interacts with PBXIP1; may prevent interaction between PBXIP1 and ESR2. Interacts with SHOC1. Interacts with REDIC1. Testis-specific. Not expressed in adult ovaries.

It is found in the chromosome. Functionally, regulator of crossing-over during meiosis. Involved in initiation and/or maintenance of chromosome synapsis and formation of crossovers. This is Testis-expressed protein 11 (TEX11) from Homo sapiens (Human).